Reading from the N-terminus, the 127-residue chain is MADLANLVEQLSSLTVLEAAELSKLLEEKWGVSAAAPVAVAAAAPAGGGAAAAPVEEKTEFNVILKSSGDKKINVIKEIRTITGLGLKEAKDLVEGAPKTVKEGVNKDEAEKIKKVLEEQGASVGIE.

Belongs to the bacterial ribosomal protein bL12 family. In terms of assembly, homodimer. Part of the ribosomal stalk of the 50S ribosomal subunit. Forms a multimeric L10(L12)X complex, where L10 forms an elongated spine to which 2 to 4 L12 dimers bind in a sequential fashion. Binds GTP-bound translation factors.

Its function is as follows. Forms part of the ribosomal stalk which helps the ribosome interact with GTP-bound translation factors. Is thus essential for accurate translation. The sequence is that of Large ribosomal subunit protein bL12 from Acidiphilium cryptum (strain JF-5).